The primary structure comprises 68 residues: Large ribosomal subunit protein bL35 (68 aa).

The protein belongs to the bacterial ribosomal protein bL35 family.

The polypeptide is Large ribosomal subunit protein bL35 (Rickettsia canadensis (strain McKiel)).